The primary structure comprises 912 residues: WD repeat-containing protein 44 (912 aa).

Residues 1-14 (MASESDTEEFFDAP) are compositionally biased toward acidic residues. Positions 1–25 (MASESDTEEFFDAPEDVHLEGGDPI) are disordered. Position 2 is an N-acetylalanine (Ala2). The binding activity stretch occupies residues 2 to 170 (ASESDTEEFF…SSTAQLNVPE (169 aa)). Ser3 is subject to Phosphoserine. Positions 9–15 (EFFDAPE) match the FFAT-like motif motif. Phosphoserine is present on residues Ser50, Ser66, Ser71, Ser81, Ser96, and Ser126. 2 disordered regions span residues 79–104 (DDSL…GTEL) and 118–152 (QEDS…KPVD). A compositionally biased stretch (polar residues) spans 89 to 104 (QSDQATASPVTAGTEL). A Phosphothreonine modification is found at Thr158. Disordered regions lie at residues 183–202 (VKES…TKDF), 207–279 (EVAP…PKEN), 318–349 (QENG…ELTD), 396–422 (SNDA…RLKQ), and 457–479 (RDEV…MPYT). Residues 210–256 (PAKPPRQLTPEPDIVASTKKPVPARPPPPANFPPPRPPPPSRPAPPP) form an important for interaction with ARHGAP26 AND ARHGAP10 region. Phosphothreonine is present on Thr218. The segment covering 232–255 (PARPPPPANFPPPRPPPPSRPAPP) has biased composition (pro residues). Ser261 carries the phosphoserine modification. Residues 261-277 (SELEFEALKTPDLDVPK) show a composition bias toward basic and acidic residues. Thr270 carries the post-translational modification Phosphothreonine. Residues 333–346 (VMGPQRPRSNSGRE) are important for interaction with RAB11A. The segment at 334–504 (MGPQRPRSNS…DFDQIKVVQD (171 aa)) is interaction with RAB11. Ser341 and Ser343 each carry phosphoserine. Thr348 bears the Phosphothreonine mark. Ser402, Ser469, Ser470, and Ser471 each carry phosphoserine. Residues 466 to 475 (DDPSSSDDEG) are compositionally biased toward acidic residues. Tyr478 is subject to Phosphotyrosine. Residues 508–547 (EHMGAVWTMKFSHCGRLLASAGQDNVVRIWALKNAFDYFN) form a WD 1 repeat. Residues 556-592 (EGRVSPSPSQESLNSSKSDTDTGVCSGTDEDPDDKNA) are disordered. Phosphoserine is present on residues Ser560 and Ser564. The segment covering 560–572 (SPSPSQESLNSSK) has biased composition (low complexity). WD repeat units lie at residues 604–642 (GHTA…CLCC), 644–684 (QHID…VALW), 689–728 (GQTK…YHTQ), 739–778 (KVGR…LSMK), 783–822 (VNSS…SKFT), and 871–912 (EDAE…KNLS).

In terms of assembly, interacts with the GTP-bound form of RAB11A when membrane-associated. Interacts with GRAF1/ARHGAP26 or GRAF2/ARHGAP10; the interaction connects the endoplasmic reticulum (ER) with the endosomal tubule. Interacts (via FFAT-like motif) with VAPA (via MSP domain) or VAPB (via MSP domain); the interaction connects the ER with the endosomal tubule. Does not bind to other Rab and Rho small G proteins. Phosphorylated by ATK1; the phosphorylation stabilizes its interaction with RAB11A and RAB11B. Highly expressed in brain.

Its subcellular location is the cytoplasm. The protein resides in the cytosol. It localises to the perinuclear region. The protein localises to the endosome membrane. It is found in the golgi apparatus. Its subcellular location is the trans-Golgi network. In terms of biological role, downstream effector for Rab11 which regulates Rab11 intracellular membrane trafficking functions such as endocytic recycling, intracellular ciliogenesis and protein export. ATK1-mediated phosphorylation of WDR44 induces binding to Rab11 which activates endocytic recycling of transferrin receptor back to the plasma membrane. When bound to Rab11, prevents the formation of the ciliogenic Rab11-Rabin8/RAB3IP-RAB11FIP3 complex, therefore inhibiting preciliary trafficking and ciliogenesis. Participates in neo-synthesized protein export by connecting the endoplasmic reticulum (ER) with the endosomal tubule via direct interactions with the integral ER proteins VAPA or VAPB and the endosomal protein GRAFs (GRAF1/ARHGAP26 or GRAF2/ARHGAP10), which facilitates the transfer of proteins such as E-cadherin, MPP14 and CFTR into a Rab8-Rab10-Rab11-dependent export route. The polypeptide is WD repeat-containing protein 44 (WDR44) (Bos taurus (Bovine)).